Here is a 186-residue protein sequence, read N- to C-terminus: Probable chorismate pyruvate-lyase (186 aa).

3 residues coordinate substrate: arginine 77, leucine 115, and glutamate 174.

Belongs to the UbiC family.

It is found in the cytoplasm. It catalyses the reaction chorismate = 4-hydroxybenzoate + pyruvate. Its pathway is cofactor biosynthesis; ubiquinone biosynthesis. In terms of biological role, removes the pyruvyl group from chorismate, with concomitant aromatization of the ring, to provide 4-hydroxybenzoate (4HB) for the ubiquinone pathway. The chain is Probable chorismate pyruvate-lyase from Shewanella sp. (strain W3-18-1).